Here is a 513-residue protein sequence, read N- to C-terminus: Catalase (513 aa).

An N-terminal signal peptide occupies residues 1–30; sequence MNPSLNAFRPGRLLVAASLTASLLSLSVQA. Residues H81 and N153 contribute to the active site. Residue Y361 participates in heme binding. Positions 391 to 407 are enriched in polar residues; the sequence is DGALNAGHSTSGVNYQP. The segment at 391–413 is disordered; it reads DGALNAGHSTSGVNYQPSRLDPR.

This sequence belongs to the catalase family. Heme is required as a cofactor.

Its subcellular location is the periplasm. The catalysed reaction is 2 H2O2 = O2 + 2 H2O. Its function is as follows. Decomposes hydrogen peroxide into water and oxygen; serves to protect cells from the toxic effects of hydrogen peroxide. The polypeptide is Catalase (katB) (Pseudomonas aeruginosa (strain ATCC 15692 / DSM 22644 / CIP 104116 / JCM 14847 / LMG 12228 / 1C / PRS 101 / PAO1)).